A 295-amino-acid polypeptide reads, in one-letter code: MQLLDGKKTSNDIKNEIAAEVQSIKAAGGKVPHLAAVLVGNNGASLTYVGSKVKSCQEIGFDSTLVSLPETITEDELLAKIKELNEDDNLDGYIVQLPLPKHIDEQKILLAIDPDKDVDGFHPTNFGRMALEMESFIPATPFGIMELLERYKVETAGKHTVVIGRSHIVGRPMSILMSRKGNPGDSTVTLTHSRTKDLAEFTKNADIIITALGVPEFLKADMVKEGVTVIDVGITRVEDASNAKGYVIKGDVDFEGVSKKASFITPVPGGVGPMTIAMLLKNTLLARKMRSAKNK.

NADP(+) contacts are provided by residues 164 to 166 (GRS), Ser-193, and Ile-234.

Belongs to the tetrahydrofolate dehydrogenase/cyclohydrolase family. As to quaternary structure, homodimer.

It carries out the reaction (6R)-5,10-methylene-5,6,7,8-tetrahydrofolate + NADP(+) = (6R)-5,10-methenyltetrahydrofolate + NADPH. The catalysed reaction is (6R)-5,10-methenyltetrahydrofolate + H2O = (6R)-10-formyltetrahydrofolate + H(+). It participates in one-carbon metabolism; tetrahydrofolate interconversion. In terms of biological role, catalyzes the oxidation of 5,10-methylenetetrahydrofolate to 5,10-methenyltetrahydrofolate and then the hydrolysis of 5,10-methenyltetrahydrofolate to 10-formyltetrahydrofolate. The sequence is that of Bifunctional protein FolD from Flavobacterium johnsoniae (strain ATCC 17061 / DSM 2064 / JCM 8514 / BCRC 14874 / CCUG 350202 / NBRC 14942 / NCIMB 11054 / UW101) (Cytophaga johnsonae).